Consider the following 163-residue polypeptide: MEQYRRAGSVELPASSPMPQLPPDTLEMRVRDGSKIRNLLGLALGRLEGGSTRHVVFSGSGRAAGKAVSCAEIVKRRVPGLHQLTKLRFLQTEDSWVPTSPDTGLDPLTVRRHVPAVWVLLSRDPLDPSECGYQPPGAPPGLGSIPSPSCGPRPRRRARDTRS.

Disordered stretches follow at residues 1 to 24 and 126 to 163; these read MEQY…LPPD and LDPS…DTRS. Over residues 153-163 the composition is skewed to basic residues; sequence RPRRRARDTRS.

The protein belongs to the histone-like Alba family.

The protein localises to the nucleus. May be a component of ribonuclease P or MRP. This chain is Ribonuclease P protein subunit p25-like protein (Rpp25l), found in Mus musculus (Mouse).